The primary structure comprises 901 residues: Protein translocase subunit SecA (901 aa).

ATP-binding positions include glutamine 87, 105 to 109, and aspartate 512; that span reads GEGKT. The segment at 868–901 is disordered; the sequence is AALAAQTGERKVGRNDPCPCGSGKKYKQCHGRLQ. 4 residues coordinate Zn(2+): cysteine 885, cysteine 887, cysteine 896, and histidine 897. Positions 891 to 901 are enriched in basic residues; it reads KKYKQCHGRLQ.

Belongs to the SecA family. Monomer and homodimer. Part of the essential Sec protein translocation apparatus which comprises SecA, SecYEG and auxiliary proteins SecDF-YajC and YidC. The cofactor is Zn(2+).

It localises to the cell inner membrane. The protein resides in the cytoplasm. It carries out the reaction ATP + H2O + cellular proteinSide 1 = ADP + phosphate + cellular proteinSide 2.. Part of the Sec protein translocase complex. Interacts with the SecYEG preprotein conducting channel. Has a central role in coupling the hydrolysis of ATP to the transfer of proteins into and across the cell membrane, serving both as a receptor for the preprotein-SecB complex and as an ATP-driven molecular motor driving the stepwise translocation of polypeptide chains across the membrane. In Escherichia coli O45:K1 (strain S88 / ExPEC), this protein is Protein translocase subunit SecA.